Reading from the N-terminus, the 1598-residue chain is Serine/threonine-protein kinase Nek1 (1598 aa).

One can recognise a Protein kinase domain in the interval 106 to 380; that stretch reads YEVIRQIGAG…ALQCLGYTIF (275 aa). Residues 112 to 120 and Lys-135 each bind ATP; that span reads IGAGRFGEV. The Proton acceptor role is filled by Asp-240.

Belongs to the protein kinase superfamily. NEK Ser/Thr protein kinase family. NIMA subfamily.

Its subcellular location is the cytoplasm. It is found in the cytoskeleton. The protein localises to the microtubule organizing center. It localises to the centrosome. The protein resides in the spindle pole. The catalysed reaction is L-seryl-[protein] + ATP = O-phospho-L-seryl-[protein] + ADP + H(+). The enzyme catalyses L-threonyl-[protein] + ATP = O-phospho-L-threonyl-[protein] + ADP + H(+). Phosphorylation status of the T-loop (amino acids 267-293) modulates kinase activity and subcellular localization of the protein. Probable serine/threonine-protein kinase. Involved in controlling centrosome splitting. Promotes separation of the centrosome outer cores. This is Serine/threonine-protein kinase Nek1 from Toxoplasma gondii (strain ATCC 50611 / Me49).